The primary structure comprises 96 residues: Aspartyl/glutamyl-tRNA(Asn/Gln) amidotransferase subunit C (96 aa).

It belongs to the GatC family. As to quaternary structure, heterotrimer of A, B and C subunits.

The enzyme catalyses L-glutamyl-tRNA(Gln) + L-glutamine + ATP + H2O = L-glutaminyl-tRNA(Gln) + L-glutamate + ADP + phosphate + H(+). It catalyses the reaction L-aspartyl-tRNA(Asn) + L-glutamine + ATP + H2O = L-asparaginyl-tRNA(Asn) + L-glutamate + ADP + phosphate + 2 H(+). In terms of biological role, allows the formation of correctly charged Asn-tRNA(Asn) or Gln-tRNA(Gln) through the transamidation of misacylated Asp-tRNA(Asn) or Glu-tRNA(Gln) in organisms which lack either or both of asparaginyl-tRNA or glutaminyl-tRNA synthetases. The reaction takes place in the presence of glutamine and ATP through an activated phospho-Asp-tRNA(Asn) or phospho-Glu-tRNA(Gln). The protein is Aspartyl/glutamyl-tRNA(Asn/Gln) amidotransferase subunit C of Bacillus licheniformis (strain ATCC 14580 / DSM 13 / JCM 2505 / CCUG 7422 / NBRC 12200 / NCIMB 9375 / NCTC 10341 / NRRL NRS-1264 / Gibson 46).